We begin with the raw amino-acid sequence, 197 residues long: Tic20 family protein Ycf60 (197 aa).

A run of 5 helical transmembrane segments spans residues 3–23 (IIIA…GVGV), 47–66 (FGYY…PDVL), 81–101 (LVVV…MSYF), 118–138 (VSQA…LNAL), and 141–161 (MILM…LTMG).

It belongs to the Tic20 family.

Its subcellular location is the plastid. The protein resides in the chloroplast membrane. This is Tic20 family protein Ycf60 (ycf60) from Cyanidioschyzon merolae (strain NIES-3377 / 10D) (Unicellular red alga).